Reading from the N-terminus, the 474-residue chain is Eukaryotic translation initiation factor 3 subunit L (474 aa).

Residues 255 to 449 (DAIRMFSHIL…DLDYALQGDL (195 aa)) form the PCI domain.

The protein belongs to the eIF-3 subunit L family. Component of the eukaryotic translation initiation factor 3 (eIF-3) complex.

The protein resides in the cytoplasm. Functionally, component of the eukaryotic translation initiation factor 3 (eIF-3) complex, which is involved in protein synthesis of a specialized repertoire of mRNAs and, together with other initiation factors, stimulates binding of mRNA and methionyl-tRNAi to the 40S ribosome. The eIF-3 complex specifically targets and initiates translation of a subset of mRNAs involved in cell proliferation. The protein is Eukaryotic translation initiation factor 3 subunit L of Chaetomium globosum (strain ATCC 6205 / CBS 148.51 / DSM 1962 / NBRC 6347 / NRRL 1970) (Soil fungus).